We begin with the raw amino-acid sequence, 488 residues long: Ribulose bisphosphate carboxylase large chain (488 aa).

Asparagine 127 and threonine 177 together coordinate substrate. The Proton acceptor role is filled by lysine 179. A substrate-binding site is contributed by lysine 181. Lysine 205, aspartate 207, and glutamate 208 together coordinate Mg(2+). Lysine 205 carries the N6-carboxylysine modification. Histidine 297 (proton acceptor) is an active-site residue. Positions 298, 330, and 382 each coordinate substrate.

The protein belongs to the RuBisCO large chain family. Type I subfamily. Heterohexadecamer of 8 large chains and 8 small chains. It depends on Mg(2+) as a cofactor.

The protein resides in the plastid. Its subcellular location is the chloroplast. It catalyses the reaction 2 (2R)-3-phosphoglycerate + 2 H(+) = D-ribulose 1,5-bisphosphate + CO2 + H2O. The enzyme catalyses D-ribulose 1,5-bisphosphate + O2 = 2-phosphoglycolate + (2R)-3-phosphoglycerate + 2 H(+). Its function is as follows. RuBisCO catalyzes two reactions: the carboxylation of D-ribulose 1,5-bisphosphate, the primary event in carbon dioxide fixation, as well as the oxidative fragmentation of the pentose substrate in the photorespiration process. Both reactions occur simultaneously and in competition at the same active site. The protein is Ribulose bisphosphate carboxylase large chain of Olisthodiscus luteus (Marine phytoflagellate).